The following is a 310-amino-acid chain: uncharacterized protein (310 aa).

The span at 1 to 11 (MKVKSILKHSR) shows a compositional bias: basic residues. Disordered regions lie at residues 1 to 227 (MKVK…SDHA) and 242 to 310 (AMEE…NENE). Positions 12–50 (MSSPSLETDSMESGQQQNMVSSTPSIDMNESDCSGTGTP) are enriched in polar residues. Basic and acidic residues predominate over residues 51-80 (SEERIRRLRWDEENLSKAEQQKSAKMKITE). The span at 91 to 105 (PDDEVPEINLDETDS) shows a compositional bias: acidic residues. Residues 110–121 (TAGTLGDTLGTL) show a composition bias toward low complexity. Basic and acidic residues-rich tracts occupy residues 126–150 (VSKD…KKEP) and 182–195 (LPSK…ETKP). The segment covering 242-253 (AMEEEALSEAEE) has biased composition (acidic residues). Basic and acidic residues predominate over residues 254 to 265 (NIPKKKPDFNEL). Position 285 is a phosphoserine (Ser285). The span at 297–310 (DSGSASDVNMNENE) shows a compositional bias: polar residues.

This is an uncharacterized protein from Schizosaccharomyces pombe (strain 972 / ATCC 24843) (Fission yeast).